The chain runs to 91 residues: Protein xpaR7 (91 aa).

This Bacillus licheniformis protein is Protein xpaR7 (xpaR7).